A 197-amino-acid polypeptide reads, in one-letter code: Phospholipid hydroperoxide glutathione peroxidase GPX4 (197 aa).

Phosphoserine is present on S40. U73 is an active-site residue. U73 is a non-standard amino acid (selenocysteine).

The protein belongs to the glutathione peroxidase family. In terms of assembly, monomer. Has a tendency to form higher mass oligomers. Interacts with FUNDC1; this interaction promotes GPX4 recruitment into mitochondria through TOM/TIM complex where it is degraded by mitophagy. Widely expressed with the highest levels in testis, heart, cerebrum, ileum, stomach, liver, jejunum and epididymis. Expressed primarily in testis and sperm midpiece (at protein level). Expressed in brain (at protein level). Expressed in heart, liver and kidney (at protein level). Expressed in retina, especially in inner segments of photoreceptor cells (at protein level). As to expression, highly expressed during embryogenesis. Down-regulated between 14.5 dpc and 17.5 dpc. In terms of tissue distribution, highly expressed during embryogenesis. In contrast to isoform Mitochondrial and isoform Nuclear, which are down-regulated between 14.5 dpc and 17.5 dpc, remains constant. Mainly expressed in sperm. Weakly expressed during embryogenesis. Down-regulated between 14.5 dpc and 17.5 dpc.

The protein resides in the mitochondrion. The protein localises to the cytoplasm. It is found in the nucleus. It catalyses the reaction a hydroperoxy polyunsaturated fatty acid + 2 glutathione = a hydroxy polyunsaturated fatty acid + glutathione disulfide + H2O. The enzyme catalyses 2 glutathione + H2O2 = glutathione disulfide + 2 H2O. The catalysed reaction is tert-butyl hydroperoxide + 2 glutathione = tert-butanol + glutathione disulfide + H2O. It carries out the reaction cumene hydroperoxide + 2 glutathione = 2-phenylpropan-2-ol + glutathione disulfide + H2O. It catalyses the reaction (9S)-hydroperoxy-(10E,12Z)-octadecadienoate + 2 glutathione = (9S)-hydroxy-(10E,12Z)-octadecadienoate + glutathione disulfide + H2O. The enzyme catalyses (13S)-hydroperoxy-(9Z,11E)-octadecadienoate + 2 glutathione = (13S)-hydroxy-(9Z,11E)-octadecadienoate + glutathione disulfide + H2O. The catalysed reaction is (5S)-hydroperoxy-(6E,8Z,11Z,14Z)-eicosatetraenoate + 2 glutathione = (5S)-hydroxy-(6E,8Z,11Z,14Z)-eicosatetraenoate + glutathione disulfide + H2O. It carries out the reaction (12R)-hydroperoxy-(5Z,8Z,10E,14Z)-eicosatetraenoate + 2 glutathione = (12R)-hydroxy-(5Z,8Z,10E,14Z)-eicosatetraenoate + glutathione disulfide + H2O. It catalyses the reaction (12S)-hydroperoxy-(5Z,8Z,10E,14Z)-eicosatetraenoate + 2 glutathione = (12S)-hydroxy-(5Z,8Z,10E,14Z)-eicosatetraenoate + glutathione disulfide + H2O. The enzyme catalyses (15S)-hydroperoxy-(5Z,8Z,11Z,13E)-eicosatetraenoate + 2 glutathione = (15S)-hydroxy-(5Z,8Z,11Z,13E)-eicosatetraenoate + glutathione disulfide + H2O. The catalysed reaction is (5S)-hydroperoxy-(6E,8Z,11Z,14Z,17Z)-eicosapentaenoate + 2 glutathione = (5S)-hydroxy-(6E,8Z,11Z,14Z,17Z)-eicosapentaenoate + glutathione disulfide + H2O. It carries out the reaction (12S)-hydroperoxy-(5Z,8Z,10E,14Z,17Z)-eicosapentaenoate + 2 glutathione = (12S)-hydroxy-(5Z,8Z,10E,14Z,17Z)-eicosapentaenoate + glutathione disulfide + H2O. It catalyses the reaction (15S)-hydroperoxy-(5Z,8Z,11Z,13E,17Z)-eicosapentaenoate + 2 glutathione = (15S)-hydroxy-(5Z,8Z,11Z,13E,17Z)-eicosapentaenoate + glutathione disulfide + H2O. The enzyme catalyses (15S)-hydroperoxy-(11Z,13E)-eicosadienoate + 2 glutathione = (15S)-hydroxy-(11Z,13E)-eicosadienoate + glutathione disulfide + H2O. The catalysed reaction is (17S)-hydroperoxy-(4Z,7Z,10Z,13Z,15E,19Z)-docosahexaenoate + 2 glutathione = (17S)-hydroxy-(4Z,7Z,10Z,13Z,15E,19Z)-docosahexaenoate + glutathione disulfide + H2O. It carries out the reaction a hydroperoxy-1,2-diacyl-glycero-3-phosphocholine + 2 glutathione = a hydroxy-1,2-diacyl-glycero-3-phosphocholine + glutathione disulfide + H2O. In terms of biological role, essential antioxidant peroxidase that directly reduces phospholipid hydroperoxide even if they are incorporated in membranes and lipoproteins. Can also reduce fatty acid hydroperoxide, cholesterol hydroperoxide and thymine hydroperoxide. Plays a key role in protecting cells from oxidative damage by preventing membrane lipid peroxidation. Required to prevent cells from ferroptosis, a non-apoptotic cell death resulting from an iron-dependent accumulation of lipid reactive oxygen species. The presence of selenocysteine (Sec) versus Cys at the active site is essential for life: it provides resistance to overoxidation and prevents cells against ferroptosis. The presence of Sec at the active site is also essential for the survival of a specific type of parvalbumin-positive interneurons, thereby preventing against fatal epileptic seizures. May be required to protect cells from the toxicity of ingested lipid hydroperoxides. Required for normal sperm development and male fertility. Essential for maturation and survival of photoreceptor cells. Plays a role in a primary T-cell response to viral and parasitic infection by protecting T-cells from ferroptosis and by supporting T-cell expansion. Plays a role of glutathione peroxidase in platelets in the arachidonic acid metabolism. Reduces hydroperoxy ester lipids formed by a 15-lipoxygenase that may play a role as down-regulator of the cellular 15-lipoxygenase pathway. Can also reduce small soluble hydroperoxides such as H2O2 and tert-butyl hydroperoxide. Specifically able to suppress the production of leukotriene and prostaglandin in response to several stimuli by reducing fatty acid hydroperoxide. Its function is as follows. Specifically required to prevent mitochondrial cell death by mediating reduction of cardiolipin hydroperoxide. Also required for normal sperm development and male fertility. Functionally, required for male fertility by stabilizing the condensed chromatin in sperm nuclei. The sequence is that of Phospholipid hydroperoxide glutathione peroxidase GPX4 from Mus musculus (Mouse).